We begin with the raw amino-acid sequence, 458 residues long: Retinoic acid receptor alpha (458 aa).

The tract at residues 1 to 87 (MSSKDNTCPP…PPPLPRIYKP (87 aa)) is modulating. Residues 39–78 (GGLPGVQHQPPLSGYSTPSPATIETQSTSSEEIVPSPPTP) form a disordered region. Residues 52–69 (GYSTPSPATIETQSTSSE) are compositionally biased toward polar residues. 2 consecutive NR C4-type zinc fingers follow at residues 88–108 (CFVC…CEGC) and 124–148 (CHRD…LQKC). Positions 88-153 (CFVCQDKSSG…RLQKCFEVGM (66 aa)) form a DNA-binding region, nuclear receptor. Positions 154 to 182 (SKESVRNDRNKKKKESPKPEAIESYILSP) are hinge. One can recognise an NR LBD domain in the interval 183-417 (ETQDLIEKVQ…LIQEMLENSE (235 aa)). Positions 407-415 (PLIQEMLEN) match the 9aaTAD motif. The segment at 419-458 (LDTLGGGASSDAPVTPVAPGSCSPSLSPSSTHSSPSTHSP) is disordered. Positions 439 to 458 (SCSPSLSPSSTHSSPSTHSP) are enriched in low complexity.

It belongs to the nuclear hormone receptor family. NR1 subfamily. As to quaternary structure, heterodimer; with an rxr molecule. Binds DNA preferentially as a rar/rxr heterodimer.

It localises to the nucleus. Receptor for retinoic acid. Retinoic acid receptors bind as heterodimers to their target response elements in response to their ligands, all-trans or 9-cis retinoic acid, and regulate gene expression in various biological processes. The rar/rxr heterodimers bind to the retinoic acid response elements (RARE) composed of tandem 5'-AGGTCA-3' sites known as DR1-DR5. Required for primary neurogenesis and for anteroposterior neural patterning. This chain is Retinoic acid receptor alpha (rara), found in Xenopus laevis (African clawed frog).